The sequence spans 269 residues: MQITRESKYIIGLVLALGVSFATLLAHLFTKPSLEWVYNHHATPFFANKFMLGGYLLVEYLSFLLMIVPLLMLGDQVNDFTFSIIHTSIWYNVFVVFTVWAFTREKLYWTAFFSLCLFSSSFTMYGQSLRLRNGFVEMISMKLPSKLVFGKSLWFVVYAFSAALHCTGIGCRVFSNVFIWFFAAMYLVPILGFHDWALSLVSAYLFLSIGIGQMFIHLFALQHIFAFIIAGLMTLFAALLFLLPYRQRRAALTGESAPLLQDNNAGPAV.

Helical transmembrane passes span 9–29 (YIIGLVLALGVSFATLLAHLF), 50–70 (FMLGGYLLVEYLSFLLMIVPL), 82–102 (FSIIHTSIWYNVFVVFTVWAF), 107–127 (LYWTAFFSLCLFSSSFTMYGQ), 147–167 (LVFGKSLWFVVYAFSAALHCT), 173–193 (VFSNVFIWFFAAMYLVPILGF), 200–220 (LVSAYLFLSIGIGQMFIHLFA), and 224–244 (IFAFIIAGLMTLFAALLFLLP).

It is found in the membrane. This is an uncharacterized protein from Schizosaccharomyces pombe (strain 972 / ATCC 24843) (Fission yeast).